The chain runs to 176 residues: Ubiquinol-cytochrome c reductase iron-sulfur subunit (176 aa).

A helical membrane pass occupies residues 15 to 36 (FLFVATGAAAAVGGAAALWPFI). Residues 87–174 (ARAVNVASLP…YQFVSDTKIQ (88 aa)) form the Rieske domain. Residues cysteine 119, histidine 121, cysteine 138, and histidine 141 each coordinate [2Fe-2S] cluster. The cysteines at positions 124 and 140 are disulfide-linked.

This sequence belongs to the Rieske iron-sulfur protein family. In terms of assembly, the main subunits of complex b-c1 are: cytochrome b, cytochrome c1 and the Rieske protein. [2Fe-2S] cluster serves as cofactor.

It localises to the cell membrane. The catalysed reaction is a quinol + 2 Fe(III)-[cytochrome c](out) = a quinone + 2 Fe(II)-[cytochrome c](out) + 2 H(+)(out). Component of the ubiquinol-cytochrome c reductase complex (complex III or cytochrome b-c1 complex), which is a respiratory chain that generates an electrochemical potential coupled to ATP synthesis. The polypeptide is Ubiquinol-cytochrome c reductase iron-sulfur subunit (petA) (Bradyrhizobium diazoefficiens (strain JCM 10833 / BCRC 13528 / IAM 13628 / NBRC 14792 / USDA 110)).